The primary structure comprises 362 residues: MPKTAMTDSTSKTSTNTASSDMAAEFDSTTARLNASLSKPQLNADGHLRHFLGIEGLSRAQLLAIIHKAESFFDDKGQLINSPELEGCTVMNLFFEPSTRTRTTFEVAEKRLGANVLNIDIARSSTQKGESLRDTLWNLQAMTADIFVVRHSASGAAHFMATEVTPDIAIINGGDGWHAHPTQAMLDMLTIHREAPRPFEELTVAIIGDIKHSRVARSDIAALKILGVKEIRVIAPRTLLPKGIERYGVKVFENIDEGVVDCDVLMGLRIQNERIGSPLMAASNEYFKKYGITPERVAKAKPDALVMHPGPMNRGVEIASSVADGPQSVILKQVNNGIAVRMAVLSMAMQGQREYQALRSST.

Residues 1-22 form a disordered region; the sequence is MPKTAMTDSTSKTSTNTASSDM. The segment covering 7 to 20 has biased composition (low complexity); the sequence is TDSTSKTSTNTASS. Carbamoyl phosphate-binding residues include Arg100 and Thr101. Lys128 contributes to the L-aspartate binding site. Arg150, His180, and Gln183 together coordinate carbamoyl phosphate. Residues Arg214 and Arg269 each coordinate L-aspartate. Carbamoyl phosphate contacts are provided by Gly310 and Pro311.

Belongs to the aspartate/ornithine carbamoyltransferase superfamily. ATCase family. As to quaternary structure, heterododecamer (2C3:3R2) of six catalytic PyrB chains organized as two trimers (C3), and six regulatory PyrI chains organized as three dimers (R2).

It catalyses the reaction carbamoyl phosphate + L-aspartate = N-carbamoyl-L-aspartate + phosphate + H(+). It functions in the pathway pyrimidine metabolism; UMP biosynthesis via de novo pathway; (S)-dihydroorotate from bicarbonate: step 2/3. Functionally, catalyzes the condensation of carbamoyl phosphate and aspartate to form carbamoyl aspartate and inorganic phosphate, the committed step in the de novo pyrimidine nucleotide biosynthesis pathway. The chain is Aspartate carbamoyltransferase catalytic subunit from Psychrobacter sp. (strain PRwf-1).